The following is a 1058-amino-acid chain: Protein argonaute MEL1 (1058 aa).

Gly residues-rich tracts occupy residues 1–12 (MAYRGGGRGGRG) and 24–37 (DVPG…GGGA). Disordered stretches follow at residues 1 to 77 (MAYR…YGAP) and 115 to 147 (RAPP…PSAT). Residues 48–70 (WPPPGMTPRPGPPQPQYPRPGPP) are compositionally biased toward pro residues. Residues 121–147 (HSSAPAPYQPAAAAPAPSSSSTAPSAT) show a composition bias toward low complexity. Residues 407-520 (TVIQFVEEFL…LPMEVCKIVE (114 aa)) form the PAZ domain. Residues 696–1016 (LLIVILPEVS…AAFRARYYVE (321 aa)) enclose the Piwi domain.

It belongs to the argonaute family. Ago subfamily.

The protein localises to the nucleus. The protein resides in the nucleolus. Functionally, essential for the progression of premeiotic mitosis and meiosis during sporogenesis. Regulates the cell division of premeiotic germ cells, the proper modification of meiotic chromosomes, and the faithful progression of meiosis, probably via small RNA-mediated gene silencing. May be involved in histone H3 'Lys-9' demethylation in the pericentromeric region. In Oryza sativa subsp. japonica (Rice), this protein is Protein argonaute MEL1 (MEL1).